Here is a 243-residue protein sequence, read N- to C-terminus: Type III pantothenate kinase (243 aa).

Residue 7 to 14 coordinates ATP; sequence DIGNTRLK. Substrate-binding positions include Tyr-95 and 102–105; that span reads GIDR. The Proton acceptor role is filled by Asp-104. ATP is bound at residue Thr-126. Thr-177 serves as a coordination point for substrate.

Belongs to the type III pantothenate kinase family. As to quaternary structure, homodimer. NH4(+) serves as cofactor. The cofactor is K(+).

It localises to the cytoplasm. The catalysed reaction is (R)-pantothenate + ATP = (R)-4'-phosphopantothenate + ADP + H(+). Its pathway is cofactor biosynthesis; coenzyme A biosynthesis; CoA from (R)-pantothenate: step 1/5. Functionally, catalyzes the phosphorylation of pantothenate (Pan), the first step in CoA biosynthesis. The chain is Type III pantothenate kinase from Acinetobacter baylyi (strain ATCC 33305 / BD413 / ADP1).